The chain runs to 122 residues: Large ribosomal subunit protein uL18 (122 aa).

The protein belongs to the universal ribosomal protein uL18 family. Part of the 50S ribosomal subunit; part of the 5S rRNA/L5/L18/L25 subcomplex. Contacts the 5S and 23S rRNAs.

This is one of the proteins that bind and probably mediate the attachment of the 5S RNA into the large ribosomal subunit, where it forms part of the central protuberance. The chain is Large ribosomal subunit protein uL18 from Buchnera aphidicola subsp. Acyrthosiphon pisum (strain 5A).